We begin with the raw amino-acid sequence, 331 residues long: Vitamin B12 import system permease protein BtuC (331 aa).

9 helical membrane-spanning segments follow: residues 18–38 (WLFG…CAGE), 64–84 (LAVL…QALF), 91–111 (PGLL…VLLG), 114–134 (VLPG…ITFI), 149–169 (LLAG…AVYF), 194–214 (LWLM…SQPL), 243–263 (GWMV…GLVI), 277–297 (VLLP…DIIA), and 305–325 (ELPI…WLLL).

The protein belongs to the binding-protein-dependent transport system permease family. FecCD subfamily. In terms of assembly, the complex is composed of two ATP-binding proteins (BtuD), two transmembrane proteins (BtuC) and a solute-binding protein (BtuF).

It is found in the cell inner membrane. Functionally, part of the ABC transporter complex BtuCDF involved in vitamin B12 import. Involved in the translocation of the substrate across the membrane. The sequence is that of Vitamin B12 import system permease protein BtuC from Klebsiella pneumoniae subsp. pneumoniae (strain ATCC 700721 / MGH 78578).